A 1672-amino-acid polypeptide reads, in one-letter code: MSSMKWLSATAVFAAVLPSVSGFCFPESKELNFSRTGTSSSTTFTETIGENGTEYIVSGNSSFTNFTNIPVKKPTTDDSSTSTPTTSSAVDPTEKIVRASSSSSPNSGDTSATPDPKGGGAFYNEHSGILSFMARSGVEGSLTLSNIKMTGDGGAIYSQGELLFTDLTGLTIQGNLSQLSGGGIFGGSTISFSGINQATFSSNTAEVVPEETTPNPNPGTQTTTSQPSPTSKVQSLFTYSSSTQANGNGADSQTPSHKPGSGGAIYATGDLTISDSQEIVFSVNKASKDGGAIFAEKNVSFENITTLKVQNNGAEEKGGGIYASGDLSIQSSKQSLFNSNTSKQGGGALYIEGNVDFKDLEEIRIKYNKSGTFETKKVTLSLPEAQTNKSSVTAASQSGPNTTPTPTPPVTAKGGGLYTEKNLSISNITGIIEITNNKATDVGGGAYVKGTLTCKDSHRLQFQKNSSEKKGGGLYTEDTITLSNLTGKTLFQENTAKEEGGGLYIQGDDKTLTMTGLDSFCLIDNTSATHGGGAYVTKEISQTYTSDVEEFPGITPVHGETIISGNKATGGSGGGVCTKHLVLSNLQTISISENFASENGGGACTCPDNFPAPTASTPSTNQTAAPKDDKDFLIDYVVSTTIDKNKATKKGAGVYAKKAKLSRIDELNISDNAAQETGGGFCCTESLELDTIASLSVTKNLAGKEGGGLHAKTLNISNLKSGLSFSNNTANSSSTGVATTATTSQSPTVSSFLPRATAGSSPAPAQTTPTYAGVVGGAIYGETVSFSKCSGLCQFTENSAIDNTPSSPSLNVQGGAIYAKTSLSIEAEDPSTSYVFSKNSVSTGKAQTTGQIAGGAIYSPSVTLNCQTVFSGNSASMATTNPPSGTSPKDTIGGAIAGTTISLSKTSHFSENTADLGAAIGTLSGGSSSNLTEKITLSNGSFTFEKNKANKRGVIYAPSVSIKGNNITFNQNTSTHDGSAIYFTKDATIESLGSVLFTGNNVTAEQASSTATGGQTTNTTNYGAAIFGDPGTQTTDTTLKLIASSGNITFSNNSQNTATNNPATKFCSISGYVKLTLQAAQGKTISFFDSIRTSTKKTGQAQNSYETLDINKTENSNTYAGTVLFSSELHEVKSYVPQNVVLHNGTLVLKKNAELHVVSFEQKEGSKLIMEPGAVLSNQNIANGALAINGLTIDLSSLGAPQTGEVFSPPELRIVATTSNSGGGGGVGGYVTASKNLSAASPTVAATNPTMADNKVFLTGALTLIDPDGNFYQNPILGTDLTDVPLIKLPTTANQVDVSNLTLSGDLSPKKGYTGTWTLNPDPQTGKVVANWKFDMYRRWEYIPRDNHFYANSILGSQNSMIVVKQGLINNMLHNARFDDAAYNNFWVSGVGTFLSQQGTPLSEEFSYYSRGTSVAIDAKPRPDFILGAAFSKMVGRTKAIKKVHNYSHKGSEYSYQASVYGGKFLYFLLNKQHGWALPFLLQGVVSYGHIKHDTTTLYPSIHEKNKGDWEDLGWLVDLRVSMDVKEPSKRSSKRVALYGELEYSSIRQKSFTEIDYDPRRFDDCAYRNLSIPMGCYFEGAIMSYDILMYNKLSLAYMPSIYRNNPVCKYWVLSSNETSKVVCGVPTRTSARAEYSTQLYLGPFWTLYGNYTIDVGMYTLAQMTSCGARMIF.

Residues 1 to 14 (MSSMKWLSATAVFA) form the signal peptide. Disordered stretches follow at residues 69-122 (IPVK…GGAF), 203-263 (NTAE…GSGG), 384-415 (EAQT…AKGG), and 734-765 (STGV…PAPA). 3 stretches are compositionally biased toward low complexity: residues 77–88 (DDSSTSTPTTSS), 100–111 (SSSSSPNSGDTS), and 203–234 (NTAE…SKVQ). 2 stretches are compositionally biased toward polar residues: residues 235–256 (SLFT…QTPS) and 384–399 (EAQT…SQSG). Over residues 734-744 (STGVATTATTS) the composition is skewed to low complexity. The region spanning 1379–1672 (DDAAYNNFWV…MTSCGARMIF (294 aa)) is the Autotransporter domain.

Belongs to the PMP outer membrane protein family.

It localises to the secreted. The protein localises to the cell wall. It is found in the cell outer membrane. The sequence is that of Probable outer membrane protein PmpB (pmpB) from Chlamydia muridarum (strain MoPn / Nigg).